Consider the following 874-residue polypeptide: MYQTTAALRSAFLEYFRTNGHQVVDSSSLVPVNDPTLLFTNAGMNQFKDVFLGEDKRSYTRATSSQRCVRAGGKHNDLDNVGYTARHHTFFEMLGNFSFGDYFKREAISFAWNFLTQELKLPKERLCVTIYETDDEAFDIWTKEIGVPAESLIRIGDNKGAPYASDNFWQMGDTGPCGPCSEIFYDHGDHIWGGRPGTPEEDGDRFIEIWNIVFMQYNRQASGEMLPLPKPSVDTGMGIERIAAIMQGVHSNYEIDIFQALIKKTAEILGVTDLENKSLRVISDHIRSCAFLIADGVMPSNEGRGYVLRRIIRRAVRHGNKLGATSSFFYKLVPTLIEVMGDAAKGLVETQAIVEKSLKAEEEQFARTLERGLGILDGALNELKGDVLDGETAFKLYDTYGFPVDLTADVCREREITVDEAGFEVAMAEQRSRAQAAGQFDTDYNDSLKIDEETHFSGYTELTAQGKVTAIYKAGESTDSLNAGEDAVIVLDSTPFYGESGGQCGDKGLLTAKGVEFDVKDTQKYGQAVGHQGTVNSGSISVGDTLEAIVDKKLRHRTELNHSVTHLLHAALRQLLGTHVTQKGSLVDAERLRFDFSHFEGVKPEELKAVEDLVNTQIRRNHKLSADVMDMDQAKERGAMALFGEKYTDEVRVVTMGDFSIELCGGTHVGRTGDIGLFKITSEGGIAAGVRRIEAVTGAAAMAYVAAQKAELDQAAALLKADSNSVVTKLKAQLDRTKLLEKELSQLKDKLAAATSADLAGEAKQVNGAKVLIKKLEGVDAGALRGLQDELKQKLGSGVVVLAIAGEAKVNLIVGVTKDLTAKVKAGELVASIAAQVGGKGGGRPDMAQAGGTEPEKLDGALEQVLPWLEERLA.

Zn(2+) is bound by residues His-562, His-566, Cys-664, and His-668.

Belongs to the class-II aminoacyl-tRNA synthetase family. It depends on Zn(2+) as a cofactor.

The protein localises to the cytoplasm. The catalysed reaction is tRNA(Ala) + L-alanine + ATP = L-alanyl-tRNA(Ala) + AMP + diphosphate. Catalyzes the attachment of alanine to tRNA(Ala) in a two-step reaction: alanine is first activated by ATP to form Ala-AMP and then transferred to the acceptor end of tRNA(Ala). Also edits incorrectly charged Ser-tRNA(Ala) and Gly-tRNA(Ala) via its editing domain. The sequence is that of Alanine--tRNA ligase from Shewanella woodyi (strain ATCC 51908 / MS32).